The chain runs to 277 residues: Undecaprenyl-diphosphatase (277 aa).

Transmembrane regions (helical) follow at residues 47 to 67 (FNII…RGKI), 85 to 105 (ANLL…ADLI), 108 to 128 (WLFN…VMLW), 187 to 207 (FSFF…GYVY), 218 to 238 (VFAV…RALL), and 249 to 269 (FAWY…FHLI).

It belongs to the UppP family.

Its subcellular location is the cell inner membrane. It catalyses the reaction di-trans,octa-cis-undecaprenyl diphosphate + H2O = di-trans,octa-cis-undecaprenyl phosphate + phosphate + H(+). In terms of biological role, catalyzes the dephosphorylation of undecaprenyl diphosphate (UPP). Confers resistance to bacitracin. This is Undecaprenyl-diphosphatase from Pseudomonas aeruginosa (strain ATCC 15692 / DSM 22644 / CIP 104116 / JCM 14847 / LMG 12228 / 1C / PRS 101 / PAO1).